We begin with the raw amino-acid sequence, 264 residues long: Small ribosomal subunit protein eS1 (264 aa).

Residues 233-264 form a disordered region; sequence GEGGGAGKPAGDETGAKVERADGYEPPVQESV. Positions 242-255 are enriched in basic and acidic residues; it reads AGDETGAKVERADG.

It belongs to the eukaryotic ribosomal protein eS1 family. Component of the small ribosomal subunit. Mature ribosomes consist of a small (40S) and a large (60S) subunit. The 40S subunit contains about 33 different proteins and 1 molecule of RNA (18S). The 60S subunit contains about 49 different proteins and 3 molecules of RNA (28S, 5.8S and 5S). Part of the small subunit (SSU) processome, composed of more than 70 proteins and the RNA chaperone small nucleolar RNA (snoRNA) U3.

It localises to the cytoplasm. The protein resides in the nucleus. Its subcellular location is the nucleolus. Component of the small ribosomal subunit. The ribosome is a large ribonucleoprotein complex responsible for the synthesis of proteins in the cell. Part of the small subunit (SSU) processome, first precursor of the small eukaryotic ribosomal subunit. During the assembly of the SSU processome in the nucleolus, many ribosome biogenesis factors, an RNA chaperone and ribosomal proteins associate with the nascent pre-rRNA and work in concert to generate RNA folding, modifications, rearrangements and cleavage as well as targeted degradation of pre-ribosomal RNA by the RNA exosome. May play a role during erythropoiesis. This is Small ribosomal subunit protein eS1 (rps3a) from Xenopus tropicalis (Western clawed frog).